Consider the following 489-residue polypeptide: NAC domain-containing protein 74 (489 aa).

One can recognise an NAC domain in the interval leucine 9–arginine 159. A DNA-binding region spans residues isoleucine 108 to glycine 165. A compositionally biased stretch (basic and acidic residues) spans lysine 413–alanine 427. A disordered region spans residues lysine 413–serine 435. Residues tryptophan 456–glycine 476 form a helical membrane-spanning segment.

In terms of tissue distribution, widely expressed.

The protein resides in the nucleus. It is found in the cell membrane. Functionally, transcription activator involved in heat and endoplasmic reticulum (ER) stress responses. Regulates the expression of genes involved in ER protein folding and heat stress-responsive genes. Binds directly to the promoter of BZIP74 and regulates its expression in response to heat stress. The sequence is that of NAC domain-containing protein 74 from Oryza sativa subsp. japonica (Rice).